We begin with the raw amino-acid sequence, 393 residues long: MANDFLFTSESVSEGHPDKVADQISDAILDAIFAQDPRSRVAAETLTNTGLVVLAGEITTNAHVDYIQVARDTIKRIGYDNTEYGIDYKGCAVLVAYDKQSNDIAQGVDQASDDHLNTGAGDQGLMFGYACDETPELMPAPIYYAHRLVERQAQLRKDGRLPFLRPDAKSQVTMRYVDGKPHSIDTVVLSTQHSPDQSETAKKMKASFTEAIIEEIIKPVLPKEWLKDTKYLINPTGRFVIGGPQGDCGLTGRKIIVDTYGGACPHGGGAFSGKDPTKVDRSAAYAARYVAKNIVAAGLARQCQIQVAYAIGVARPMNITVYTEGTGVIPDDQLARLVAEHFDLRPKGIIQMLDLLRPIYEKTAAYGHFGREEPEFSWEKTDKANALRAAAGR.

H16 serves as a coordination point for ATP. Residue D18 participates in Mg(2+) binding. K(+) is bound at residue E44. L-methionine-binding residues include E57 and Q100. The flexible loop stretch occupies residues 100-110 (QSNDIAQGVDQ). Residues 167–169 (DAK), 238–239 (RF), D247, 253–254 (RK), A270, and K274 contribute to the ATP site. D247 contributes to the L-methionine binding site. K278 lines the L-methionine pocket.

It belongs to the AdoMet synthase family. As to quaternary structure, homotetramer; dimer of dimers. The cofactor is Mg(2+). It depends on K(+) as a cofactor.

The protein localises to the cytoplasm. It catalyses the reaction L-methionine + ATP + H2O = S-adenosyl-L-methionine + phosphate + diphosphate. Its pathway is amino-acid biosynthesis; S-adenosyl-L-methionine biosynthesis; S-adenosyl-L-methionine from L-methionine: step 1/1. Functionally, catalyzes the formation of S-adenosylmethionine (AdoMet) from methionine and ATP. The overall synthetic reaction is composed of two sequential steps, AdoMet formation and the subsequent tripolyphosphate hydrolysis which occurs prior to release of AdoMet from the enzyme. The sequence is that of S-adenosylmethionine synthase from Methylibium petroleiphilum (strain ATCC BAA-1232 / LMG 22953 / PM1).